The sequence spans 678 residues: Elongation factor G 2 (678 aa).

Residues 4–278 (QKLRNIGIIA…AVVDYLPSPQ (275 aa)) form the tr-type G domain. GTP is bound by residues 13 to 20 (AHVDAGKT), 77 to 81 (DTPGH), and 131 to 134 (NKMD).

It belongs to the TRAFAC class translation factor GTPase superfamily. Classic translation factor GTPase family. EF-G/EF-2 subfamily.

It localises to the cytoplasm. Its function is as follows. Catalyzes the GTP-dependent ribosomal translocation step during translation elongation. During this step, the ribosome changes from the pre-translocational (PRE) to the post-translocational (POST) state as the newly formed A-site-bound peptidyl-tRNA and P-site-bound deacylated tRNA move to the P and E sites, respectively. Catalyzes the coordinated movement of the two tRNA molecules, the mRNA and conformational changes in the ribosome. The sequence is that of Elongation factor G 2 from Hahella chejuensis (strain KCTC 2396).